Here is a 275-residue protein sequence, read N- to C-terminus: Alpha carbonic anhydrase 7 (275 aa).

The first 27 residues, 1 to 27 (MVNYSSISCIFFVALFSIFTIVSISSA), serve as a signal peptide directing secretion. 2 N-linked (GlcNAc...) asparagine glycosylation sites follow: N3 and N96. The 235-residue stretch at 38–272 (REFNYKKNDE…TNKRIVHLYR (235 aa)) folds into the Alpha-carbonic anhydrase domain. A disulfide bridge connects residues C63 and C222. The Proton acceptor role is filled by H104. 3 residues coordinate Zn(2+): H130, H132, and H149. 218 to 219 (TT) is a binding site for substrate. N225 carries an N-linked (GlcNAc...) asparagine glycan.

It belongs to the alpha-class carbonic anhydrase family. The cofactor is Zn(2+). In terms of processing, N-glycosylated.

It localises to the plastid. Its subcellular location is the chloroplast stroma. The catalysed reaction is hydrogencarbonate + H(+) = CO2 + H2O. Its function is as follows. Reversible hydration of carbon dioxide. This chain is Alpha carbonic anhydrase 7 (ACA7), found in Arabidopsis thaliana (Mouse-ear cress).